A 222-amino-acid chain; its full sequence is Ribonuclease S-3 (222 aa).

The N-terminal stretch at Met1 to Ala22 is a signal peptide. A disulfide bridge links Cys38 with Cys44. Asn50 carries N-linked (GlcNAc...) asparagine glycosylation. His54 functions as the Proton donor in the catalytic mechanism. RNA contacts are provided by residues His54, Gln92 to Met93, His109 to Glu110, and Arg113 to His114. Cystine bridges form between Cys68/Cys117, Cys177/Cys210, and Cys193/Cys204. The active site involves Glu110. Residue His114 is the Proton acceptor of the active site.

The protein belongs to the RNase T2 family.

It is found in the secreted. It localises to the extracellular space. The enzyme catalyses a ribonucleotidyl-ribonucleotide-RNA + H2O = a 3'-end 3'-phospho-ribonucleotide-RNA + a 5'-end dephospho-ribonucleoside-RNA + H(+). Functionally, self-incompatibility (SI) is the inherited ability of a flowering plant to prevent self-fertilization by discriminating between self and non-self pollen during pollination. In many species, self-incompatibility is controlled by the single, multiallelic locus S. The chain is Ribonuclease S-3 (S3) from Petunia hybrida (Petunia).